A 283-amino-acid polypeptide reads, in one-letter code: Putative F-box protein At1g60370 (283 aa).

The region spanning 4–53 (GEKLESIPIDLIIEIHSRLPAESVARFRCVSKLWGSMFRRPYFTELFLTR) is the F-box domain.

The polypeptide is Putative F-box protein At1g60370 (Arabidopsis thaliana (Mouse-ear cress)).